We begin with the raw amino-acid sequence, 331 residues long: 3-dehydrosphinganine reductase TSC10B (331 aa).

Over 1–7 (MAAIFSL) the chain is Lumenal. A helical membrane pass occupies residues 8–28 (FLFFILFIVSLLIILSFIVRP). The Cytoplasmic portion of the chain corresponds to 29–262 (RSVTIPIKFR…ICFDGIKAGK (234 aa)). NADPH contacts are provided by Gly44, Ser46, Ser47, Gly48, Arg69, Lys73, and Asp95. The GXSXG signature appears at 44 to 48 (GGSSG). Ser172 functions as the Proton donor in the catalytic mechanism. Catalysis depends on Tyr186, which acts as the Proton acceptor. Residues Tyr186 and Lys190 each contribute to the NADP(+) site. Residue Lys190 is the Lowers pKa of active site Tyr of the active site. Residues 263 to 283 (FTVTCHFIGFLLSIASTGMSP) form a helical membrane-spanning segment. The Lumenal segment spans residues 284-286 (QGS). A helical membrane pass occupies residues 287-307 (FWLALTEVMFGGLIRLASLVF). The Cytoplasmic segment spans residues 308–331 (QWQWYKTIEKWSQRNKKEVNSKLA).

It belongs to the short-chain dehydrogenases/reductases (SDR) family. Expressed in roots, leaves, stems and flowers.

It is found in the endoplasmic reticulum membrane. It carries out the reaction sphinganine + NADP(+) = 3-oxosphinganine + NADPH + H(+). The protein operates within lipid metabolism; sphingolipid metabolism. Its function is as follows. Catalyzes the reduction of 3'-oxosphinganine (3-ketodihydrosphingosine/KDS) to sphinganine (dihydrosphingosine/DHS), the second step of de novo sphingolipid biosynthesis. In plants, sphingolipids seems to play a critical role in mineral ion homeostasis, most likely through their involvement in the ion transport functionalities of membrane systems in the root. Is stereospecific for D-erythro-DHS production and does not produce L-threo-DHS. This Arabidopsis thaliana (Mouse-ear cress) protein is 3-dehydrosphinganine reductase TSC10B (TSC10B).